We begin with the raw amino-acid sequence, 366 residues long: Actin-like protein 8 (366 aa).

It belongs to the actin family. As to expression, strongly expressed in testis and pancreas. Weak expression in placenta.

The protein resides in the cytoplasm. It is found in the cytoskeleton. The protein is Actin-like protein 8 (ACTL8) of Homo sapiens (Human).